The chain runs to 75 residues: Probable protein BRICK1-B (75 aa).

The stretch at 41–72 forms a coiled coil; that stretch reads MSCRSRLATLNEKLTTLERRIEYIEARVTKGE.

The protein belongs to the BRK1 family.

The protein resides in the cytoplasm. It localises to the cytoskeleton. Involved in regulation of actin and microtubule organization. Part of a WAVE complex that activates the Arp2/3 complex. In Xenopus laevis (African clawed frog), this protein is Probable protein BRICK1-B (brk1-b).